The following is a 165-amino-acid chain: Phosphopantetheine adenylyltransferase (165 aa).

S10 provides a ligand contact to substrate. ATP is bound by residues 10 to 11 (SF) and H18. Residues K42, T79, and R93 each contribute to the substrate site. ATP-binding positions include 94 to 96 (GLR), E104, and 129 to 135 (VRPITAT).

The protein belongs to the bacterial CoaD family. In terms of assembly, homohexamer. Mg(2+) serves as cofactor.

The protein resides in the cytoplasm. The catalysed reaction is (R)-4'-phosphopantetheine + ATP + H(+) = 3'-dephospho-CoA + diphosphate. Its pathway is cofactor biosynthesis; coenzyme A biosynthesis; CoA from (R)-pantothenate: step 4/5. In terms of biological role, reversibly transfers an adenylyl group from ATP to 4'-phosphopantetheine, yielding dephospho-CoA (dPCoA) and pyrophosphate. The sequence is that of Phosphopantetheine adenylyltransferase from Nitrobacter winogradskyi (strain ATCC 25391 / DSM 10237 / CIP 104748 / NCIMB 11846 / Nb-255).